Here is a 254-residue protein sequence, read N- to C-terminus: MSLDFTVVIPARLRSTRLPGKPLLLIAGKPMVQHVWEQARKSGAGRVVIATDDASIVEACQAFGAEVLMTRADHESGTDRLAEVAAQLGLPADAIVVNVQGDEPLIPPVIIDQVAANLAAHPEAGIATLAEPIHDPETVFNPNAVKVVSDKNGLALSFSRAPLPWARDAFAKDRNQLPQGVPYRRHIGMYAYRVGFLQDFVSWGPCWLEQTEALEQLRALWHGVRIHVADAIEAPAVGVDTAQDLERVRRLLEA.

The protein belongs to the KdsB family.

Its subcellular location is the cytoplasm. The enzyme catalyses 3-deoxy-alpha-D-manno-oct-2-ulosonate + CTP = CMP-3-deoxy-beta-D-manno-octulosonate + diphosphate. The protein operates within nucleotide-sugar biosynthesis; CMP-3-deoxy-D-manno-octulosonate biosynthesis; CMP-3-deoxy-D-manno-octulosonate from 3-deoxy-D-manno-octulosonate and CTP: step 1/1. It participates in bacterial outer membrane biogenesis; lipopolysaccharide biosynthesis. Functionally, activates KDO (a required 8-carbon sugar) for incorporation into bacterial lipopolysaccharide in Gram-negative bacteria. In Pseudomonas putida (strain W619), this protein is 3-deoxy-manno-octulosonate cytidylyltransferase.